A 315-amino-acid chain; its full sequence is Small ribosomal subunit biogenesis GTPase RsgA (315 aa).

One can recognise a CP-type G domain in the interval 82–246 (DQFKSKVLAA…LIDSPGFQEF (165 aa)). GTP-binding positions include 130 to 133 (NKID) and 184 to 192 (GQSGMGKSS). Positions 270, 275, 277, and 283 each coordinate Zn(2+).

This sequence belongs to the TRAFAC class YlqF/YawG GTPase family. RsgA subfamily. As to quaternary structure, monomer. Associates with 30S ribosomal subunit, binds 16S rRNA. Zn(2+) serves as cofactor.

It is found in the cytoplasm. Its function is as follows. One of several proteins that assist in the late maturation steps of the functional core of the 30S ribosomal subunit. Helps release RbfA from mature subunits. May play a role in the assembly of ribosomal proteins into the subunit. Circularly permuted GTPase that catalyzes slow GTP hydrolysis, GTPase activity is stimulated by the 30S ribosomal subunit. This Ralstonia pickettii (strain 12J) protein is Small ribosomal subunit biogenesis GTPase RsgA.